We begin with the raw amino-acid sequence, 99 residues long: PqqA binding protein (99 aa).

It belongs to the PqqD family. As to quaternary structure, monomer. Interacts with PqqE.

Its pathway is cofactor biosynthesis; pyrroloquinoline quinone biosynthesis. Functionally, functions as a PqqA binding protein and presents PqqA to PqqE, in the pyrroloquinoline quinone (PQQ) biosynthetic pathway. The chain is PqqA binding protein from Acinetobacter baylyi (strain ATCC 33305 / BD413 / ADP1).